The sequence spans 376 residues: RNA binding protein fox-1 homolog 1 (376 aa).

The segment at 1-126 (MEEKGSRMVQ…QPKRLHVSNI (126 aa)) is disordered. Polar residues predominate over residues 72 to 89 (QTHSEQSPADTNAQTVSG). Residues 90–101 (TATQTDDAAPTD) are compositionally biased toward low complexity. The span at 102-115 (GQPQTQPSENTENK) shows a compositional bias: polar residues. Residues 119–195 (KRLHVSNIPF…RKIEVNNATA (77 aa)) form the RRM domain. Arg319 is subject to Asymmetric dimethylarginine.

In terms of assembly, binds to the C-terminus of ATXN2.

It is found in the nucleus. Its subcellular location is the cytoplasm. Functionally, RNA-binding protein that regulates alternative splicing events by binding to 5'-UGCAUGU-3' elements. Prevents binding of U2AF2 to the 3'-splice site. Regulates alternative splicing of tissue-specific exons and of differentially spliced exons during erythropoiesis. The polypeptide is RNA binding protein fox-1 homolog 1 (RBFOX1) (Macaca fascicularis (Crab-eating macaque)).